The sequence spans 215 residues: LysM and putative peptidoglycan-binding domain-containing protein 1 (215 aa).

Residues 37–81 (LEHQVQPGDTLQGLALRYGVSMEQIKRANRLYTNDSIFLKKSLYI) enclose the LysM domain. 2 stretches are compositionally biased toward polar residues: residues 86–103 (GQSD…SETE) and 173–189 (GNRT…QQRS). 2 disordered regions span residues 86 to 133 (GQSD…PVDF) and 148 to 203 (AVKK…TRAS).

This is LysM and putative peptidoglycan-binding domain-containing protein 1 (lysmd1) from Xenopus laevis (African clawed frog).